The primary structure comprises 378 residues: 4-hydroxy-3-methylbut-2-en-1-yl diphosphate synthase (flavodoxin) (378 aa).

Residues Cys-268, Cys-271, Cys-303, and Glu-310 each contribute to the [4Fe-4S] cluster site.

This sequence belongs to the IspG family. Requires [4Fe-4S] cluster as cofactor.

The catalysed reaction is (2E)-4-hydroxy-3-methylbut-2-enyl diphosphate + oxidized [flavodoxin] + H2O + 2 H(+) = 2-C-methyl-D-erythritol 2,4-cyclic diphosphate + reduced [flavodoxin]. It participates in isoprenoid biosynthesis; isopentenyl diphosphate biosynthesis via DXP pathway; isopentenyl diphosphate from 1-deoxy-D-xylulose 5-phosphate: step 5/6. Functionally, converts 2C-methyl-D-erythritol 2,4-cyclodiphosphate (ME-2,4cPP) into 1-hydroxy-2-methyl-2-(E)-butenyl 4-diphosphate. In Corynebacterium efficiens (strain DSM 44549 / YS-314 / AJ 12310 / JCM 11189 / NBRC 100395), this protein is 4-hydroxy-3-methylbut-2-en-1-yl diphosphate synthase (flavodoxin).